A 548-amino-acid polypeptide reads, in one-letter code: Lysine--tRNA ligase (548 aa).

The short motif at 52–60 (PSGLPHIGT) is the 'HIGH' region element. The 'KMSKS' region signature appears at 300-304 (KISKS). Lys-303 is an ATP binding site.

It belongs to the class-I aminoacyl-tRNA synthetase family.

It is found in the cytoplasm. The enzyme catalyses tRNA(Lys) + L-lysine + ATP = L-lysyl-tRNA(Lys) + AMP + diphosphate. This is Lysine--tRNA ligase from Mesorhizobium japonicum (strain LMG 29417 / CECT 9101 / MAFF 303099) (Mesorhizobium loti (strain MAFF 303099)).